Reading from the N-terminus, the 285-residue chain is 2,3,4,5-tetrahydropyridine-2,6-dicarboxylate N-succinyltransferase (285 aa).

Substrate contacts are provided by arginine 111 and aspartate 148.

It belongs to the transferase hexapeptide repeat family. Homotrimer.

It localises to the cytoplasm. It carries out the reaction (S)-2,3,4,5-tetrahydrodipicolinate + succinyl-CoA + H2O = (S)-2-succinylamino-6-oxoheptanedioate + CoA. Its pathway is amino-acid biosynthesis; L-lysine biosynthesis via DAP pathway; LL-2,6-diaminopimelate from (S)-tetrahydrodipicolinate (succinylase route): step 1/3. This is 2,3,4,5-tetrahydropyridine-2,6-dicarboxylate N-succinyltransferase from Rhizobium meliloti (strain 1021) (Ensifer meliloti).